Consider the following 72-residue polypeptide: ATP synthase subunit c (72 aa).

2 helical membrane passes run 5–25 and 52–72; these read LLAA…IGIA and GLSE…LFVV.

This sequence belongs to the ATPase C chain family. F-type ATPases have 2 components, F(1) - the catalytic core - and F(0) - the membrane proton channel. F(1) has five subunits: alpha(3), beta(3), gamma(1), delta(1), epsilon(1). F(0) has three main subunits: a(1), b(2) and c(10-14). The alpha and beta chains form an alternating ring which encloses part of the gamma chain. F(1) is attached to F(0) by a central stalk formed by the gamma and epsilon chains, while a peripheral stalk is formed by the delta and b chains.

The protein localises to the cell membrane. Functionally, f(1)F(0) ATP synthase produces ATP from ADP in the presence of a proton or sodium gradient. F-type ATPases consist of two structural domains, F(1) containing the extramembraneous catalytic core and F(0) containing the membrane proton channel, linked together by a central stalk and a peripheral stalk. During catalysis, ATP synthesis in the catalytic domain of F(1) is coupled via a rotary mechanism of the central stalk subunits to proton translocation. Key component of the F(0) channel; it plays a direct role in translocation across the membrane. A homomeric c-ring of between 10-14 subunits forms the central stalk rotor element with the F(1) delta and epsilon subunits. This is ATP synthase subunit c from Clostridium perfringens (strain SM101 / Type A).